The chain runs to 198 residues: MICOS complex subunit MIC26 (198 aa).

The first 25 residues, 1-25 (MFKVIHRYVGPASLSLLTFKVYASS), serve as a signal peptide directing secretion. Residues 108–128 (PGFFPRLGVIGFAGVVGLVLA) form a helical membrane-spanning segment. O-linked (Xyl...) (chondroitin sulfate) serine glycosylation is present at Ser162.

This sequence belongs to the apolipoprotein O/MICOS complex subunit Mic27 family. Component of the mitochondrial contact site and cristae organizing system (MICOS) complex, composed of at least MICOS10/MIC10, CHCHD3/MIC19, CHCHD6/MIC25, APOOL/MIC27, IMMT/MIC60, APOO/MIC23/MIC26 and MICOS13/MIC13. This complex was also known under the names MINOS or MitOS complex. The MICOS complex associates with mitochondrial outer membrane proteins SAMM50, MTX1 and MTX2 (together described as components of the mitochondrial outer membrane sorting assembly machinery (SAM) complex) and DNAJC11, mitochondrial inner membrane protein TMEM11 and with HSPA9. The MICOS and SAM complexes together with DNAJC11 are part of a large protein complex spanning both membranes termed the mitochondrial intermembrane space bridging (MIB) complex. Interacts with IMMT/MIC60. Interacts with MICOS10/MIC10 and APOOL/MIC27. O-glycosylation; glycosaminoglycan of chondroitin-sulfate type.

The protein localises to the mitochondrion inner membrane. It is found in the secreted. Its subcellular location is the mitochondrion. It localises to the endoplasmic reticulum membrane. The protein resides in the golgi apparatus membrane. In terms of biological role, component of the MICOS complex, a large protein complex of the mitochondrial inner membrane that plays crucial roles in the maintenance of crista junctions, inner membrane architecture, and formation of contact sites to the outer membrane. Plays a crucial role in crista junction formation and mitochondrial function. Can induce cardiac lipotoxicity by enhancing mitochondrial respiration and fatty acid metabolism in cardiac myoblasts. Promotes cholesterol efflux from macrophage cells. Detected in HDL, LDL and VLDL. Secreted by a microsomal triglyceride transfer protein (MTTP)-dependent mechanism, probably as a VLDL-associated protein that is subsequently transferred to HDL. This chain is MICOS complex subunit MIC26 (APOO), found in Bos taurus (Bovine).